The primary structure comprises 410 residues: Bifunctional enzyme IspD/IspF (410 aa).

The 2-C-methyl-D-erythritol 4-phosphate cytidylyltransferase stretch occupies residues 1–257; that stretch reads MSHDPVVPSA…AGAGSASSRL (257 aa). The tract at residues 258 to 410 is 2-C-methyl-D-erythritol 2,4-cyclodiphosphate synthase; that stretch reads RSGIGTDVHA…AVATALVERL (153 aa). A divalent metal cation contacts are provided by Asp264 and His266. 4-CDP-2-C-methyl-D-erythritol 2-phosphate-binding positions include 264-266 and 290-291; these read DVH and HS. An a divalent metal cation-binding site is contributed by His298. 4-CDP-2-C-methyl-D-erythritol 2-phosphate is bound by residues 312–314, 385–388, Phe392, and Arg395; these read DIG and TTTD.

The protein in the N-terminal section; belongs to the IspD/TarI cytidylyltransferase family. IspD subfamily. It in the C-terminal section; belongs to the IspF family. The cofactor is a divalent metal cation.

The enzyme catalyses 2-C-methyl-D-erythritol 4-phosphate + CTP + H(+) = 4-CDP-2-C-methyl-D-erythritol + diphosphate. The catalysed reaction is 4-CDP-2-C-methyl-D-erythritol 2-phosphate = 2-C-methyl-D-erythritol 2,4-cyclic diphosphate + CMP. It functions in the pathway isoprenoid biosynthesis; isopentenyl diphosphate biosynthesis via DXP pathway; isopentenyl diphosphate from 1-deoxy-D-xylulose 5-phosphate: step 2/6. Its pathway is isoprenoid biosynthesis; isopentenyl diphosphate biosynthesis via DXP pathway; isopentenyl diphosphate from 1-deoxy-D-xylulose 5-phosphate: step 4/6. Functionally, bifunctional enzyme that catalyzes the formation of 4-diphosphocytidyl-2-C-methyl-D-erythritol from CTP and 2-C-methyl-D-erythritol 4-phosphate (MEP) (IspD), and catalyzes the conversion of 4-diphosphocytidyl-2-C-methyl-D-erythritol 2-phosphate (CDP-ME2P) to 2-C-methyl-D-erythritol 2,4-cyclodiphosphate (ME-CPP) with a corresponding release of cytidine 5-monophosphate (CMP) (IspF). The chain is Bifunctional enzyme IspD/IspF from Clavibacter michiganensis subsp. michiganensis (strain NCPPB 382).